Here is a 423-residue protein sequence, read N- to C-terminus: Adenylosuccinate synthetase (423 aa).

GTP-binding positions include 12–18 (GDEGKGK) and 40–42 (GHT). The Proton acceptor role is filled by Asp-13. Mg(2+) contacts are provided by Asp-13 and Gly-40. IMP is bound by residues 13–16 (DEGK), 38–41 (NAGH), Thr-129, Arg-143, Gln-221, Thr-236, and Arg-300. Residue His-41 is the Proton donor of the active site. 296–302 (AVTGRKR) contributes to the substrate binding site. GTP is bound by residues Arg-302, 328–330 (KSD), and 408–410 (SVG).

The protein belongs to the adenylosuccinate synthetase family. In terms of assembly, homodimer. Mg(2+) serves as cofactor.

The protein resides in the cytoplasm. It carries out the reaction IMP + L-aspartate + GTP = N(6)-(1,2-dicarboxyethyl)-AMP + GDP + phosphate + 2 H(+). Its pathway is purine metabolism; AMP biosynthesis via de novo pathway; AMP from IMP: step 1/2. Functionally, plays an important role in the de novo pathway of purine nucleotide biosynthesis. Catalyzes the first committed step in the biosynthesis of AMP from IMP. The protein is Adenylosuccinate synthetase of Parabacteroides distasonis (strain ATCC 8503 / DSM 20701 / CIP 104284 / JCM 5825 / NCTC 11152).